We begin with the raw amino-acid sequence, 222 residues long: ER membrane protein complex subunit 7 homolog (222 aa).

An N-terminal signal peptide occupies residues 1–16 (MKSILLLFSLIVLGSA). Residues 17-145 (TEEVSRTEQT…RKREEWRITD (129 aa)) lie on the Extracellular side of the membrane. A helical transmembrane segment spans residues 146 to 166 (MLFSPMVLMLVVPLVVMLILP). Over 167-222 (KMTANDPELKKEMENMQMPKVDMPDVGEMMANFFGGSAPAKKKAVTGGSGSGQRRK) the chain is Cytoplasmic.

The protein belongs to the EMC7 family.

It localises to the membrane. In Caenorhabditis elegans, this protein is ER membrane protein complex subunit 7 homolog.